The following is a 449-amino-acid chain: MLDKIVIANRGEIALRILRACKELGIKTVAVHSSADRDLKHVLLADETVCIGPAPSVKSYLNIPAIISAAEITGAVAIHPGYGFLSENANFAEQVERSGFIFIGPKAETIRLMGDKVSAIAAMKKAGVPCVPGSDGPLGDDMDKNRAIAKRIGYPVIIKASGGGGGRGMRVVRGDAELAQSISMTRAEAKAAFSNDMVYMEKYLENPRHVEIQVLADGQGNAIYLAERDCSMQRRHQKVVEEAPAPGITPELRRYIGERCAKACVDIGYRGAGTFEFLFENGEFYFIEMNTRIQVEHPVTEMITGVDLIKEQLRIAAGQPLSIKQEEVHVRGHAVECRINAEDPNTFLPSPGKITRFHAPGGFGVRWESHIYAGYTVPPYYDSMIGKLICYGENRDVAIARMKNALQELIIDGIKTNVDLQIRIMNDENFQHGGTNIHYLEKKLGLQEK.

Residues 1 to 445 (MLDKIVIANR…NIHYLEKKLG (445 aa)) enclose the Biotin carboxylation domain. Residues K116, K159, 165–166 (GG), 201–204 (EKYL), H209, and H236 contribute to the ATP site. The region spanning 120-317 (IAAMKKAGVP…LIKEQLRIAA (198 aa)) is the ATP-grasp domain. K238 is a binding site for hydrogencarbonate. Residues E276 and E288 each contribute to the ATP site. Residues E276, E288, and N290 each coordinate Mg(2+). Mn(2+) is bound by residues E276, E288, and N290. The hydrogencarbonate site is built by R292, V295, and R338. Residue R292 is part of the active site. R338 contacts biotin.

As to quaternary structure, acetyl-CoA carboxylase is a heterohexamer of biotin carboxyl carrier protein, biotin carboxylase and the two subunits of carboxyl transferase in a 2:2 complex. Mg(2+) is required as a cofactor. Requires Mn(2+) as cofactor.

It carries out the reaction N(6)-biotinyl-L-lysyl-[protein] + hydrogencarbonate + ATP = N(6)-carboxybiotinyl-L-lysyl-[protein] + ADP + phosphate + H(+). The protein operates within lipid metabolism; malonyl-CoA biosynthesis; malonyl-CoA from acetyl-CoA: step 1/1. Its function is as follows. This protein is a component of the acetyl coenzyme A carboxylase complex; first, biotin carboxylase catalyzes the carboxylation of the carrier protein and then the transcarboxylase transfers the carboxyl group to form malonyl-CoA. The polypeptide is Biotin carboxylase (accC) (Escherichia coli (strain K12)).